A 195-amino-acid polypeptide reads, in one-letter code: Probable GTP-binding protein EngB (195 aa).

Residues 22 to 195 enclose the EngB-type G domain; the sequence is GYPEIALVGR…WKWIEDRMGE (174 aa). GTP is bound by residues 30–37, 57–61, 75–78, 142–145, and 173–176; these read GRSNVGKS, GKTQT, DVPG, TKSD, and MFSA. Mg(2+) contacts are provided by serine 37 and threonine 59.

The protein belongs to the TRAFAC class TrmE-Era-EngA-EngB-Septin-like GTPase superfamily. EngB GTPase family. Mg(2+) serves as cofactor.

Its function is as follows. Necessary for normal cell division and for the maintenance of normal septation. The polypeptide is Probable GTP-binding protein EngB (Pediococcus pentosaceus (strain ATCC 25745 / CCUG 21536 / LMG 10740 / 183-1w)).